Here is a 456-residue protein sequence, read N- to C-terminus: MALTLYNTLTRSEEAFTPIDPSNVRLYVCGPTVYDYAHVGNARTFSAFDLLARLLKHLYPRVTYARNITDVDDKIIDRSQRSGEPIDGVTARTTAQFHADMDALGLLRPDIEPRATTHIPQMIAMIGRLVEQGFAYAAEGHVLFHVPAMPDYGRLSRRSQDELIAGARVEVAPYKRSPADFVLWKPAKPGEPGWDSPWGTGRPGWHIECSAMTAAHLGAVFDIHGGGLDLIFPHHENEIAQSRCAHGTAVMANVWMHSGFLTIAGDKMSKSLGNFYTVRELLDEFPGEAIRLALLSAHYRQPLDFTKEKIAQAKQALDRWYGVLRGLEEVRAAEVPFDVLAALEDDLNTPLAISHLHELATAFHKADAAARPGLAGRLKAAAGLLGFLRQDPDAWFRGTPKGTDGLDEAAIEAAIQARKEARKAKDFAEADRIRAALLEQGIVLEDGPQGTSWKRA.

Cys-29 is a binding site for Zn(2+). The short motif at 31–41 (PTVYDYAHVGN) is the 'HIGH' region element. Zn(2+)-binding residues include Cys-209, His-234, and Glu-238. Positions 267–271 (KMSKS) match the 'KMSKS' region motif. Residue Lys-270 participates in ATP binding.

This sequence belongs to the class-I aminoacyl-tRNA synthetase family. In terms of assembly, monomer. The cofactor is Zn(2+).

It localises to the cytoplasm. It catalyses the reaction tRNA(Cys) + L-cysteine + ATP = L-cysteinyl-tRNA(Cys) + AMP + diphosphate. The chain is Cysteine--tRNA ligase from Rhodospirillum centenum (strain ATCC 51521 / SW).